The sequence spans 132 residues: MRMLLHLSILTLACVWTFAVEIPMHTVVKETLIQLSTHRALLTSNETVRLPVPTHKNHQLCIGEIFRGLDILKNQTVRGGTVETLFQNLSLIKKYIDRQKEKCGEERRRTRQFLDYLQEFLGVMGTEWTMEH.

The first 19 residues, 1–19, serve as a signal peptide directing secretion; sequence MRMLLHLSILTLACVWTFA. N-linked (GlcNAc...) asparagine glycosylation is found at Asn-45, Asn-74, and Asn-88.

This sequence belongs to the IL-5 family. In terms of assembly, homodimer; disulfide-linked. Interacts with IL5RA. Interacts with CSF2RB.

Its subcellular location is the secreted. Homodimeric cytokine expressed predominantly by T-lymphocytes and NK cells that plays an important role in the survival, differentiation, and chemotaxis of eosinophils. Also acts on activated and resting B-cells to induce immunoglobulin production, growth, and differentiation. Mechanistically, exerts its biological effects through a receptor composed of IL5RA subunit and the cytokine receptor common subunit beta/CSF2RB. Binding to the receptor leads to activation of various kinases including LYN, SYK and JAK2 and thereby propagates signals through the RAS-MAPK and JAK-STAT5 pathways respectively. This chain is Interleukin-5 (IL5), found in Sigmodon hispidus (Hispid cotton rat).